The primary structure comprises 106 residues: L-rhamnose mutarotase (106 aa).

Residue Tyr20 participates in substrate binding. The active-site Proton donor is the His24. Residues Tyr43 and 78–79 contribute to the substrate site; that span reads WW.

The protein belongs to the rhamnose mutarotase family. Homodimer.

It localises to the cytoplasm. The enzyme catalyses alpha-L-rhamnose = beta-L-rhamnose. It functions in the pathway carbohydrate metabolism; L-rhamnose metabolism. Involved in the anomeric conversion of L-rhamnose. The protein is L-rhamnose mutarotase of Rhizobium etli (strain ATCC 51251 / DSM 11541 / JCM 21823 / NBRC 15573 / CFN 42).